The primary structure comprises 244 residues: DNA polymerase sliding clamp (244 aa).

This sequence belongs to the PCNA family. As to quaternary structure, homotrimer. The subunits circularize to form a toroid; DNA passes through its center. Replication factor C (RFC) is required to load the toroid on the DNA.

Its function is as follows. Sliding clamp subunit that acts as a moving platform for DNA processing. Responsible for tethering the catalytic subunit of DNA polymerase to DNA during high-speed replication. In conjunction with replication factor C (RFC) stimulates DNA synthesis by PolB, relieving inhibition by replication protein A (RPA). This chain is DNA polymerase sliding clamp, found in Methanothermobacter thermautotrophicus (strain ATCC 29096 / DSM 1053 / JCM 10044 / NBRC 100330 / Delta H) (Methanobacterium thermoautotrophicum).